Reading from the N-terminus, the 57-residue chain is Somatostatin-2 (57 aa).

Residues Gly1 to Arg26 are disordered.

The protein belongs to the somatostatin family.

Its subcellular location is the secreted. Somatostatin inhibits the release of somatotropin. The polypeptide is Somatostatin-2 (sst2) (Piaractus mesopotamicus (Small-scaled pacu)).